We begin with the raw amino-acid sequence, 247 residues long: Small ribosomal subunit protein uS2 (247 aa).

It belongs to the universal ribosomal protein uS2 family.

This Halorhodospira halophila (strain DSM 244 / SL1) (Ectothiorhodospira halophila (strain DSM 244 / SL1)) protein is Small ribosomal subunit protein uS2.